Here is a 253-residue protein sequence, read N- to C-terminus: Trypsin beta (253 aa).

An N-terminal signal peptide occupies residues 1-22; the sequence is MLKFVILLSAVACALGGTIPEG. The propeptide at 23–30 is activation peptide; sequence LLPQLDGR. A Peptidase S1 domain is found at 31–253; the sequence is IVGGTATTIS…DLRSWVINNA (223 aa). An intrachain disulfide couples cysteine 56 to cysteine 72. Catalysis depends on charge relay system residues histidine 71 and aspartate 116. Disulfide bonds link cysteine 180–cysteine 197 and cysteine 206–cysteine 230. Serine 210 serves as the catalytic Charge relay system.

This sequence belongs to the peptidase S1 family.

The protein resides in the secreted. Its subcellular location is the extracellular space. The enzyme catalyses Preferential cleavage: Arg-|-Xaa, Lys-|-Xaa.. In Drosophila erecta (Fruit fly), this protein is Trypsin beta (betaTry).